The primary structure comprises 99 residues: Nucleoid-associated protein Cj1642 (99 aa).

This sequence belongs to the YbaB/EbfC family. As to quaternary structure, homodimer.

The protein resides in the cytoplasm. It localises to the nucleoid. Its function is as follows. Binds to DNA and alters its conformation. May be involved in regulation of gene expression, nucleoid organization and DNA protection. The sequence is that of Nucleoid-associated protein Cj1642 from Campylobacter jejuni subsp. jejuni serotype O:2 (strain ATCC 700819 / NCTC 11168).